The following is a 169-amino-acid chain: MATGPRYRVPFRRRREGRTNYHVRYRLILSRKPRVVVRKGNANITIQLIIAELKGDRTLLTVSSKELRNYGFQHSTGNVPAAYLTGLLFGKKMLALGYNEGILDIGLHSNSRGSRVYAALKGVVDAGVDVPHSPEVFPDDSRIRGEVIRDYTGVDVVSQFEAAREKILG.

This sequence belongs to the universal ribosomal protein uL18 family. Part of the 50S ribosomal subunit. Contacts the 5S and 23S rRNAs.

In terms of biological role, this is one of the proteins that bind and probably mediate the attachment of the 5S RNA into the large ribosomal subunit, where it forms part of the central protuberance. The polypeptide is Large ribosomal subunit protein uL18 (Methanothrix thermoacetophila (strain DSM 6194 / JCM 14653 / NBRC 101360 / PT) (Methanosaeta thermophila)).